The sequence spans 302 residues: MNPLVINLQKCSIHDGPGIRSTVFFKGCPLECVWCHNPESQTYTKQVLYNEERCSKCEACINICPHKAIYKGETKICLDQDKCEFCETCLDYCVNNAREIVGQEYSVRDLVKEIEKDRIFYEESGGGVTLSGGEVMAQDMDFICGVINMCKSKGIHVAIDTCGYAKSENYERVAKCADLFLYDIKLIDEDKHIKFTGKSNDLILKNVKILSELGANINIRIPLIVGVNVDDENLEVKKMIEFLKPLNIQAVSLLPYHNIGKHKYDKIYKKYEGEELQRPSEEKLEEIKRLFEASNFNTKIGG.

A Radical SAM core domain is found at 14-297 (HDGPGIRSTV…KRLFEASNFN (284 aa)). The [4Fe-4S] cluster site is built by C28, C32, C35, C54, C57, C60, and C93. Residue 34 to 36 (WCH) participates in S-adenosyl-L-methionine binding. 4Fe-4S ferredoxin-type domains follow at residues 45-74 (KQVL…KGET) and 75-103 (KICL…IVGQ). S-adenosyl-L-methionine is bound by residues G133, 183-185 (DIK), and H257.

The protein belongs to the organic radical-activating enzymes family. The cofactor is [4Fe-4S] cluster.

The enzyme catalyses glycyl-[protein] + reduced [flavodoxin] + S-adenosyl-L-methionine = glycin-2-yl radical-[protein] + semiquinone [flavodoxin] + 5'-deoxyadenosine + L-methionine + H(+). Catalyzes activation of the trans-4-hydroxy-L-proline dehydratase under anaerobic conditions by generation of an organic free radical on a glycine residue, via a homolytic cleavage of S-adenosyl-L-methionine (SAM). Is involved in the anaerobic degradation of 4-hydroxyproline. This is Trans-4-hydroxy-L-proline dehydratase activating enzyme from Clostridioides difficile (Peptoclostridium difficile).